Consider the following 313-residue polypeptide: Ribosomal RNA small subunit methyltransferase H (313 aa).

Residues 35–37 (GGH), Asp-55, Phe-80, Asp-102, and Gln-109 each bind S-adenosyl-L-methionine.

The protein belongs to the methyltransferase superfamily. RsmH family.

It is found in the cytoplasm. It carries out the reaction cytidine(1402) in 16S rRNA + S-adenosyl-L-methionine = N(4)-methylcytidine(1402) in 16S rRNA + S-adenosyl-L-homocysteine + H(+). Functionally, specifically methylates the N4 position of cytidine in position 1402 (C1402) of 16S rRNA. This chain is Ribosomal RNA small subunit methyltransferase H, found in Shewanella oneidensis (strain ATCC 700550 / JCM 31522 / CIP 106686 / LMG 19005 / NCIMB 14063 / MR-1).